Reading from the N-terminus, the 504-residue chain is Maturase K (504 aa).

The protein belongs to the intron maturase 2 family. MatK subfamily.

Its subcellular location is the plastid. The protein resides in the chloroplast. Usually encoded in the trnK tRNA gene intron. Probably assists in splicing its own and other chloroplast group II introns. The sequence is that of Maturase K from Aruncus dioicus (Goat's beard).